A 181-amino-acid polypeptide reads, in one-letter code: Large ribosomal subunit protein uL6 (181 aa).

Belongs to the universal ribosomal protein uL6 family. Part of the 50S ribosomal subunit.

Functionally, this protein binds to the 23S rRNA, and is important in its secondary structure. It is located near the subunit interface in the base of the L7/L12 stalk, and near the tRNA binding site of the peptidyltransferase center. The protein is Large ribosomal subunit protein uL6 of Synechococcus sp. (strain JA-2-3B'a(2-13)) (Cyanobacteria bacterium Yellowstone B-Prime).